The chain runs to 453 residues: tRNA modification GTPase MnmE (453 aa).

(6S)-5-formyl-5,6,7,8-tetrahydrofolate contacts are provided by Arg-22, Glu-79, and Lys-119. A TrmE-type G domain is found at 215–376 (GMKVVIAGRP…LKLHLKSLMG (162 aa)). Residue Asn-225 participates in K(+) binding. Residues 225–230 (NAGKSS), 244–250 (TEIAGTT), 269–272 (DTAG), and 334–337 (NKAD) contribute to the GTP site. Ser-229 serves as a coordination point for Mg(2+). The K(+) site is built by Thr-244, Ile-246, and Thr-249. Mg(2+) is bound at residue Thr-250. Lys-453 is a (6S)-5-formyl-5,6,7,8-tetrahydrofolate binding site.

Belongs to the TRAFAC class TrmE-Era-EngA-EngB-Septin-like GTPase superfamily. TrmE GTPase family. Homodimer. Heterotetramer of two MnmE and two MnmG subunits. K(+) is required as a cofactor.

It is found in the cytoplasm. Functionally, exhibits a very high intrinsic GTPase hydrolysis rate. Involved in the addition of a carboxymethylaminomethyl (cmnm) group at the wobble position (U34) of certain tRNAs, forming tRNA-cmnm(5)s(2)U34. This Shewanella putrefaciens (strain CN-32 / ATCC BAA-453) protein is tRNA modification GTPase MnmE.